The sequence spans 212 residues: Molybdenum cofactor guanylyltransferase (212 aa).

GTP contacts are provided by residues L14–G16, K27, N55, D73, and D108. Residue D108 participates in Mg(2+) binding.

Belongs to the MobA family. Monomer. Mg(2+) serves as cofactor.

It localises to the cytoplasm. The catalysed reaction is Mo-molybdopterin + GTP + H(+) = Mo-molybdopterin guanine dinucleotide + diphosphate. Functionally, transfers a GMP moiety from GTP to Mo-molybdopterin (Mo-MPT) cofactor (Moco or molybdenum cofactor) to form Mo-molybdopterin guanine dinucleotide (Mo-MGD) cofactor. The sequence is that of Molybdenum cofactor guanylyltransferase from Bradyrhizobium sp. (strain ORS 278).